Reading from the N-terminus, the 288-residue chain is MKNGAFPHDNAAVPNVERVLPLFSLKGRTAIVSGAGAGIGLAVAQAFAEAGANVAIWYNSNKQAVTSAEDIAKTYGVKCKAYQVNVTSAEAVDKAITEIIKEFNGRLDVFVANSGITWTEGAFIDGSVESARNVMSVNVDGVMWCAKSAGAHFRRQKEEGTTIDGKPLDNFIAGSFIATASMSGSIVNVPQLQAVYNSSKAAVIHFCKSLAVEWTGFARVNTVSPGYIITEISNFVPPETKTLWKDKIVMGREGRVGELKGAYLYLASDASSYTTGLDMIVDGGYSLP.

Positions 39, 113, and 147 each coordinate NADP(+). Catalysis depends on S181, which acts as the Proton donor. Residues Y196, K200, I228, and T230 each contribute to the NADP(+) site. Residue Y196 is the Proton acceptor of the active site. Residue K200 is the Lowers pKa of active site Tyr of the active site.

This sequence belongs to the short-chain dehydrogenases/reductases (SDR) family.

The enzyme catalyses xylitol + NADP(+) = L-xylulose + NADPH + H(+). The protein operates within carbohydrate degradation; L-arabinose degradation via L-arabinitol; D-xylulose 5-phosphate from L-arabinose (fungal route): step 3/5. Functionally, L-xylulose reductase involved in the catabolism of L-arabinose through an oxidoreductive pathway. Catalyzes the NADPH-dependent reduction of L-xylulose. Is also able to convert D-xylulose, D-ribulose, L-sorbose, and D-fructose to their corresponding polyols. The protein is L-xylulose reductase of Hypocrea jecorina (strain QM6a) (Trichoderma reesei).